Reading from the N-terminus, the 634-residue chain is Mitochondrial Rho GTPase 1 (634 aa).

Over 1–604 (MLCCMRICVC…PRSEEDVEGK (604 aa)) the chain is Cytoplasmic. The 170-residue stretch at 2–171 (LCCMRICVCG…FFLCQKAVTH (170 aa)) folds into the Miro 1 domain. GTP-binding positions include 11–18 (GDEGTGKS), 60–64 (DTSAV), and 116–119 (NKSD). EF-hand domains lie at 187 to 222 (AAVA…CFEK) and 307 to 342 (EGYR…TPGL). Residues Asp-200, Asp-202, Asp-204, Tyr-206, Glu-211, Asp-320, Asp-322, Asp-324, and Glu-331 each coordinate Ca(2+). The disordered stretch occupies residues 399–419 (NPSTTAALKVTRPRKRRKRPG). Over residues 409–419 (TRPRKRRKRPG) the composition is skewed to basic residues. The region spanning 423 to 589 (RNVVLGHIVG…FVHIAEAAME (167 aa)) is the Miro 2 domain. GTP-binding positions include 432-439 (GAPGSGKS), 468-472 (ELPGG), and 538-541 (LKAD). Residues 605 to 625 (WMSWGIALGAVVCAGAAAVMI) form a helical; Anchor for type IV membrane protein membrane-spanning segment. Over 626–634 (WRRVSGSGV) the chain is Mitochondrial intermembrane.

The protein belongs to the mitochondrial Rho GTPase family.

The protein resides in the mitochondrion outer membrane. Its function is as follows. Mitochondrial GTPase involved in mitochondrial trafficking. Probably involved in control of anterograde transport of mitochondria and their subcellular distribution. The chain is Mitochondrial Rho GTPase 1 (gem1) from Emericella nidulans (strain FGSC A4 / ATCC 38163 / CBS 112.46 / NRRL 194 / M139) (Aspergillus nidulans).